Consider the following 356-residue polypeptide: Cyanide hydratase (356 aa).

The 280-residue stretch at 8–287 (YKAAAVNAEP…EGLLFVDIDL (280 aa)) folds into the CN hydrolase domain. E48 functions as the Proton acceptor in the catalytic mechanism. Residue K130 is part of the active site. The active-site Nucleophile is C165.

The protein belongs to the carbon-nitrogen hydrolase superfamily. Nitrilase family. Oligomer of dimers, forming left-handed helical fibers.

The enzyme catalyses formamide = hydrogen cyanide + H2O. Its function is as follows. Catalyzes the hydration of cyanide to formamide. Degradation of cyanide may be important for plant pathogenic fungi in infection of cyanogenic plants. Can also transform some nitriles like 2-cyanopyridine and fumaronitrile. This Aspergillus niger protein is Cyanide hydratase.